Reading from the N-terminus, the 474-residue chain is ATP synthase subunit beta (474 aa).

Position 153-160 (153-160) interacts with ATP; it reads GGAGVGKT.

The protein belongs to the ATPase alpha/beta chains family. In terms of assembly, F-type ATPases have 2 components, CF(1) - the catalytic core - and CF(0) - the membrane proton channel. CF(1) has five subunits: alpha(3), beta(3), gamma(1), delta(1), epsilon(1). CF(0) has three main subunits: a(1), b(2) and c(9-12). The alpha and beta chains form an alternating ring which encloses part of the gamma chain. CF(1) is attached to CF(0) by a central stalk formed by the gamma and epsilon chains, while a peripheral stalk is formed by the delta and b chains.

It localises to the cell inner membrane. It carries out the reaction ATP + H2O + 4 H(+)(in) = ADP + phosphate + 5 H(+)(out). Functionally, produces ATP from ADP in the presence of a proton gradient across the membrane. The catalytic sites are hosted primarily by the beta subunits. The polypeptide is ATP synthase subunit beta (Rickettsia typhi (strain ATCC VR-144 / Wilmington)).